The following is a 72-amino-acid chain: MSFYTVVATFLSVVLASAVFWVLAPKENQTVWRSTIILSMSMMFLMWAVTYLSQLHPLVVPRRSDLRPEFAE.

Over 1-2 (MS) the chain is Lumenal. The helical transmembrane segment at 3-23 (FYTVVATFLSVVLASAVFWVL) threads the bilayer. Over 24 to 34 (APKENQTVWRS) the chain is Cytoplasmic. A helical transmembrane segment spans residues 35–55 (TIILSMSMMFLMWAVTYLSQL). Residues 56-72 (HPLVVPRRSDLRPEFAE) are Lumenal-facing.

This sequence belongs to the V-ATPase e1/e2 subunit family. V-ATPase is a heteromultimeric enzyme composed of a peripheral catalytic V1 complex (components A to H) attached to an integral membrane V0 proton pore complex (components: a, c, c', c'', d, e, f and VOA1).

It is found in the vacuole membrane. Subunit of the V0 complex of vacuolar(H+)-ATPase (V-ATPase), a multisubunit enzyme composed of a peripheral complex (V1) that hydrolyzes ATP and a membrane integral complex (V0) that translocates protons. V-ATPase is responsible for acidifying and maintaining the pH of intracellular compartments. This is V-type proton ATPase subunit e (VMA9) from Eremothecium gossypii (strain ATCC 10895 / CBS 109.51 / FGSC 9923 / NRRL Y-1056) (Yeast).